Consider the following 384-residue polypeptide: Spermidine/putrescine import ATP-binding protein PotA (384 aa).

The ABC transporter domain maps to 6-238; it reads IAFKNVSKVF…PINHFVATFI (233 aa). Residue 40–47 participates in ATP binding; that stretch reads GASGSGKS.

This sequence belongs to the ABC transporter superfamily. Spermidine/putrescine importer (TC 3.A.1.11.1) family. In terms of assembly, the complex is composed of two ATP-binding proteins (PotA), two transmembrane proteins (PotB and PotC) and a solute-binding protein (PotD).

The protein resides in the cell membrane. The catalysed reaction is ATP + H2O + polyamine-[polyamine-binding protein]Side 1 = ADP + phosphate + polyamineSide 2 + [polyamine-binding protein]Side 1.. Its function is as follows. Part of the ABC transporter complex PotABCD involved in spermidine/putrescine import. Responsible for energy coupling to the transport system. The protein is Spermidine/putrescine import ATP-binding protein PotA of Streptococcus agalactiae serotype Ia (strain ATCC 27591 / A909 / CDC SS700).